The primary structure comprises 272 residues: Formamidopyrimidine-DNA glycosylase (272 aa).

Proline 2 (schiff-base intermediate with DNA) is an active-site residue. The active-site Proton donor is the glutamate 3. Lysine 56 (proton donor; for beta-elimination activity) is an active-site residue. Positions 89, 108, and 149 each coordinate DNA. The FPG-type zinc finger occupies 234-268 (LAYGRAGEMCVNCETPLENLKLGQRASVFCPQCQP). The active-site Proton donor; for delta-elimination activity is the arginine 258.

The protein belongs to the FPG family. Monomer. Requires Zn(2+) as cofactor.

The catalysed reaction is Hydrolysis of DNA containing ring-opened 7-methylguanine residues, releasing 2,6-diamino-4-hydroxy-5-(N-methyl)formamidopyrimidine.. It carries out the reaction 2'-deoxyribonucleotide-(2'-deoxyribose 5'-phosphate)-2'-deoxyribonucleotide-DNA = a 3'-end 2'-deoxyribonucleotide-(2,3-dehydro-2,3-deoxyribose 5'-phosphate)-DNA + a 5'-end 5'-phospho-2'-deoxyribonucleoside-DNA + H(+). In terms of biological role, involved in base excision repair of DNA damaged by oxidation or by mutagenic agents. Acts as a DNA glycosylase that recognizes and removes damaged bases. Has a preference for oxidized purines, such as 7,8-dihydro-8-oxoguanine (8-oxoG). Has AP (apurinic/apyrimidinic) lyase activity and introduces nicks in the DNA strand. Cleaves the DNA backbone by beta-delta elimination to generate a single-strand break at the site of the removed base with both 3'- and 5'-phosphates. The chain is Formamidopyrimidine-DNA glycosylase from Acinetobacter baylyi (strain ATCC 33305 / BD413 / ADP1).